Here is a 486-residue protein sequence, read N- to C-terminus: UDP-N-acetylmuramoyl-L-alanyl-D-glutamate--2,6-diaminopimelate ligase (486 aa).

Residue Ser31 coordinates UDP-N-acetyl-alpha-D-muramoyl-L-alanyl-D-glutamate. 109–115 (GTNGKTT) is an ATP binding site. Residues Asn150, 151–152 (TT), Ser178, and Arg186 contribute to the UDP-N-acetyl-alpha-D-muramoyl-L-alanyl-D-glutamate site. Lys218 carries the post-translational modification N6-carboxylysine. Meso-2,6-diaminopimelate is bound by residues Arg381, 405–408 (DNPR), Gly455, and Glu459. A Meso-diaminopimelate recognition motif motif is present at residues 405 to 408 (DNPR).

It belongs to the MurCDEF family. MurE subfamily. Mg(2+) is required as a cofactor. Post-translationally, carboxylation is probably crucial for Mg(2+) binding and, consequently, for the gamma-phosphate positioning of ATP.

It is found in the cytoplasm. It catalyses the reaction UDP-N-acetyl-alpha-D-muramoyl-L-alanyl-D-glutamate + meso-2,6-diaminopimelate + ATP = UDP-N-acetyl-alpha-D-muramoyl-L-alanyl-gamma-D-glutamyl-meso-2,6-diaminopimelate + ADP + phosphate + H(+). The protein operates within cell wall biogenesis; peptidoglycan biosynthesis. Functionally, catalyzes the addition of meso-diaminopimelic acid to the nucleotide precursor UDP-N-acetylmuramoyl-L-alanyl-D-glutamate (UMAG) in the biosynthesis of bacterial cell-wall peptidoglycan. In Halalkalibacterium halodurans (strain ATCC BAA-125 / DSM 18197 / FERM 7344 / JCM 9153 / C-125) (Bacillus halodurans), this protein is UDP-N-acetylmuramoyl-L-alanyl-D-glutamate--2,6-diaminopimelate ligase.